The sequence spans 163 residues: Beta-carbonic anhydrase 1 (163 aa).

The Zn(2+) site is built by Cys-35, Asp-37, His-88, and Cys-91.

Belongs to the beta-class carbonic anhydrase family. As to quaternary structure, homotetramer. The cofactor is Zn(2+).

It carries out the reaction hydrogencarbonate + H(+) = CO2 + H2O. Its function is as follows. Catalyzes the reversible hydration of carbon dioxide to form bicarbonate. The protein is Beta-carbonic anhydrase 1 of Mycobacterium bovis (strain ATCC BAA-935 / AF2122/97).